The chain runs to 133 residues: MGGALSTVFGSGEDATAAGTESEPSRVLKFSSSARWQLHFNEIKESNKLLVVDFSASWCGPCRMIEPAIHAMADKFNDVDFVKLDVDELPDVAKEFNVTAMPTFVLVKRGKEIERIIGAKKDELEKKVSKLRA.

The interval 1–22 (MGGALSTVFGSGEDATAAGTES) is disordered. In terms of domain architecture, Thioredoxin spans 6-133 (STVFGSGEDA…LEKKVSKLRA (128 aa)). Residues C59 and C62 each act as nucleophile in the active site. Residues C59 and C62 are joined by a disulfide bond.

This sequence belongs to the thioredoxin family. Plant H-type subfamily. As to quaternary structure, interacts with MDH1.

It is found in the cytoplasm. The protein resides in the mitochondrion. Its function is as follows. Thiol-disulfide oxidoreductase probably involved in the redox regulation of a number of cytosolic enzymes. Possesses insulin disulfide bonds reducing activity. This chain is Thioredoxin H2 (TRX2), found in Arabidopsis thaliana (Mouse-ear cress).